A 108-amino-acid chain; its full sequence is Iron-sulfur cluster assembly protein CyaY (108 aa).

Belongs to the frataxin family.

In terms of biological role, involved in iron-sulfur (Fe-S) cluster assembly. May act as a regulator of Fe-S biogenesis. The chain is Iron-sulfur cluster assembly protein CyaY from Burkholderia orbicola (strain MC0-3).